A 191-amino-acid chain; its full sequence is dCTP deaminase (191 aa).

DCTP is bound by residues 112–117 (KSTYAR), 136–138 (TLE), Gln-157, Tyr-173, and Gln-183. Glu-138 functions as the Proton donor/acceptor in the catalytic mechanism.

This sequence belongs to the dCTP deaminase family. Homotrimer.

It carries out the reaction dCTP + H2O + H(+) = dUTP + NH4(+). It functions in the pathway pyrimidine metabolism; dUMP biosynthesis; dUMP from dCTP (dUTP route): step 1/2. Functionally, catalyzes the deamination of dCTP to dUTP. The protein is dCTP deaminase of Xylella fastidiosa (strain 9a5c).